A 187-amino-acid polypeptide reads, in one-letter code: Ribosome-recycling factor (187 aa).

This sequence belongs to the RRF family.

Its subcellular location is the cytoplasm. In terms of biological role, responsible for the release of ribosomes from messenger RNA at the termination of protein biosynthesis. May increase the efficiency of translation by recycling ribosomes from one round of translation to another. The polypeptide is Ribosome-recycling factor (Nitrosococcus oceani (strain ATCC 19707 / BCRC 17464 / JCM 30415 / NCIMB 11848 / C-107)).